The sequence spans 400 residues: MTQTVNEREDPLNLGGGGWASSIPLRTWPSYHRRQRGAPMSKRRYRDGPKTEYEAPRKQPKQQHIPGPWFQPPRGPYWALYSNWGRCGGPWRPPLVAFQSPLCPAQMIRAYGLHPLCVCCCSCWNGPWNPGWERPPGRKKRWGRRGRGLRRHPRRSFPRNPPIDLSKMLRPVNLYGWRAPGMRAPRNTTQFIMNQVYEDMRQQEKLERQQAALRAHQAQAGGISPGDSTTNDAPQSGAEEDSQLPEDLYGFMQDPSLTFSPAPGQQNQSPTPGLVEEEEKNVDDDECDEEVCDEKEESEEEEVDGESEDEDVDEEEVEEAGNGEEREEDQEEEDVSEEAGLEEGEQREEDKFLPLGMPLSILVGDEEERENFMNYDYLSQEQIIPNVPEADLFMVPDISH.

The segment covering 1-11 (MTQTVNEREDP) has biased composition (basic and acidic residues). Disordered stretches follow at residues 1 to 68 (MTQT…IPGP), 134 to 164 (RPPG…PPID), and 203 to 353 (QEKL…DKFL). The segment covering 31 to 45 (YHRRQRGAPMSKRRY) has biased composition (basic residues). Residues 46–57 (RDGPKTEYEAPR) are compositionally biased toward basic and acidic residues. The span at 137–157 (GRKKRWGRRGRGLRRHPRRSF) shows a compositional bias: basic residues. Positions 209 to 220 (QQAALRAHQAQA) are enriched in low complexity. Over residues 255 to 271 (PSLTFSPAPGQQNQSPT) the composition is skewed to polar residues. The segment covering 275-347 (VEEEEKNVDD…EAGLEEGEQR (73 aa)) has biased composition (acidic residues). Positions 299 to 335 (EEEEVDGESEDEDVDEEEVEEAGNGEEREEDQEEEDV) form a coiled coil.

The protein resides in the nucleus. Functionally, regulator of histone epigenetic modifications and chromatin compaction into the sperm head, required for histone-to-protamine (HTP) transition. HTP is a key event in which somatic histones are first replaced by testis-specific histone variants, then transition proteins (TNPs) are incorporated into the spermatid nucleus, and finally protamines (PRMs) replace the TNPs to promote chromatin condensation. The sequence is that of Coiled-coil domain-containing glutamate-rich protein 1 (Ccer1) from Rattus norvegicus (Rat).